The following is a 363-amino-acid chain: GDP-fucose transporter (363 aa).

Transmembrane regions (helical) follow at residues 30–47 (VITAVSAYWVFSIGLVFL), 62–79 (FITWYQCLVTVFLCLFLS), 126–148 (VSFYYVGRSLTTVFNVVCTYLIL), 152–171 (TSGQAIGCCALIIFGFLLGV), 180–202 (LSYTGVIFGVLASLSVALNAIYT), 222–244 (LNALVLFLPLMLFNGEFGAVFYF), 251–273 (TFWILMTLGGVFGFMMGYVTGWQ), and 307–326 (LLWWTSNFVVLFGSGMYTYV). The disordered stretch occupies residues 334-363 (KNSGASPASEAKSDKVKLLGRDGNAAEESV). Residues 344–353 (AKSDKVKLLG) are compositionally biased toward basic and acidic residues.

Belongs to the TPT transporter family. SLC35C subfamily.

It is found in the golgi apparatus membrane. In terms of biological role, involved in GDP-fucose import from the cytoplasm into the Golgi lumen. The polypeptide is GDP-fucose transporter (Caenorhabditis elegans).